Here is a 612-residue protein sequence, read N- to C-terminus: MSAELIAVYKDEQIIDLESAKVLGLSDGVKALKGSEPIYFDDSPLALEVIRHSCAHLLAQSLKALYPDAKFFVGPVVEEGFYYDFKTASKISEEDLPKIEAKMKEFAKSKLAITKEVLTKEQALERFKGDELKHAVMSKISGDAFGVYQQGGFEDLCKGPHLPNTRFLNHFKLTKLAGAYLGGDEKNEMLIRIYGIAFATKEGLKDYLFQIEEAKKRDHRKLGVELGLFSFDDEIGAGLPLWLPKGARLRKRIEDLLSKALLLRGYEPVKGPEILKSDVWKISGHYDNYKENMYFTTIDEQEYGIKPMNCVGHIKVYQSALHSYRDLPLRFYEYGVVHRHEKSGVLHGLLRVREFTQDDAHIFCSFEQIQSEVSAILDFTHKIMKAFDFSYEMELSTRPAKSIGDDKVWEKATNALKEALKEHHINYKIDEGGGAFYGPKIDIKITDALKRKWQCGTIQVDMNLPERFKLAFTNEHNNAEQPVMIHRAILGSFERFIAILSEHFWGNFPFFVAPTQIVLIPINEEHHVFALKLKEELKKRDIFVEVLDKNDSLNKKVRLAEKQKIPMILVLGNEEMETEILSIRDREKQAQYKMPLKEFLNMVESKMQEVSF.

The segment at 218–509 (DHRKLGVELG…LSEHFWGNFP (292 aa)) is catalytic. Zn(2+) is bound by residues Cys-310, His-361, and His-486.

It belongs to the class-II aminoacyl-tRNA synthetase family. As to quaternary structure, homodimer. Requires Zn(2+) as cofactor.

The protein resides in the cytoplasm. The enzyme catalyses tRNA(Thr) + L-threonine + ATP = L-threonyl-tRNA(Thr) + AMP + diphosphate + H(+). Its function is as follows. Catalyzes the attachment of threonine to tRNA(Thr) in a two-step reaction: L-threonine is first activated by ATP to form Thr-AMP and then transferred to the acceptor end of tRNA(Thr). Also edits incorrectly charged L-seryl-tRNA(Thr). This Helicobacter acinonychis (strain Sheeba) protein is Threonine--tRNA ligase.